A 133-amino-acid polypeptide reads, in one-letter code: Interleukin-4 (133 aa).

Residues 1–24 form the signal peptide; sequence MGLTSQLIPTLVCLLACTSNFVHG. Disulfide bonds link C27–C133, C48–C85, and C70–C105. N62 carries N-linked (GlcNAc...) asparagine glycosylation.

Belongs to the IL-4/IL-13 family.

Its subcellular location is the secreted. In terms of biological role, participates in at least several B-cell activation processes as well as of other cell types. It is a costimulator of DNA-synthesis. It induces the expression of class II MHC molecules on resting B-cells. It enhances both secretion and cell surface expression of IgE and IgG1. It also regulates the expression of the low affinity Fc receptor for IgE (CD23) on both lymphocytes and monocytes. Positively regulates IL31RA expression in macrophages. Stimulates autophagy in dendritic cells by interfering with mTORC1 signaling and through the induction of RUFY4. The sequence is that of Interleukin-4 (IL4) from Sus scrofa (Pig).